The sequence spans 2427 residues: Interferon-induced very large GTPase 1 (2427 aa).

Residues 1485–1726 form the VLIG-type G domain; that stretch reads DKRLFVLSVL…KISDFKFRVQ (242 aa). Residues 1495–1502, 1548–1551, and 1625–1628 contribute to the GTP site; these read GLQSSGKS, DTEG, and TAKD.

The protein belongs to the TRAFAC class dynamin-like GTPase superfamily. Very large inducible GTPase (VLIG) family. As to expression, widely expressed. Expressed at low basal level in lung, heart, thymus and spleen; at still lower level in liver, ovary, kidney and brain. Expressed at very weak level in testis. Undetectable in embryo.

It localises to the cytoplasm. It is found in the cytosol. The protein resides in the nucleus. This is Interferon-induced very large GTPase 1 (Gvin1) from Mus musculus (Mouse).